We begin with the raw amino-acid sequence, 211 residues long: WW domain-containing protein WWM1 (211 aa).

The WW domain occupies 9-43 (PQVPSGWKAVFDDEYQTWYYVDLSTNSSQWEPPRG). The disordered stretch occupies residues 32-116 (STNSSQWEPP…QRYYPQQAPM (85 aa)). Glycyl lysine isopeptide (Lys-Gly) (interchain with G-Cter in ubiquitin) cross-links involve residues lysine 50 and lysine 60. The residue at position 75 (serine 75) is a Phosphoserine. At threonine 78 the chain carries Phosphothreonine. The span at 80–116 (QVQAGAQAQQPRYYQPQQPQYPQYPQQQRYYPQQAPM) shows a compositional bias: low complexity.

Interacts with metacaspase MCA1.

It is found in the cytoplasm. The protein resides in the nucleus. It localises to the mitochondrion. Its function is as follows. Involved in apoptosis. May play a role in nuclear function controlling cellular proliferation coupled to mitochondrial biogenesis. Causes impaired growth when overexpressed. This is WW domain-containing protein WWM1 (WWM1) from Saccharomyces cerevisiae (strain ATCC 204508 / S288c) (Baker's yeast).